Here is a 30-residue protein sequence, read N- to C-terminus: Poly-His-poly-Gly peptide 2 (30 aa).

A compositionally biased stretch (basic residues) spans 1-18 (EDDHDHHHHHHHHHHHHG). Residues 1-30 (EDDHDHHHHHHHHHHHHGVGGGGGGGGGGA) form a disordered region. Positions 19–30 (VGGGGGGGGGGA) are enriched in gly residues.

In terms of tissue distribution, expressed by the venom gland.

It is found in the secreted. Functionally, may serve as a metalloproteinase inhibitor during glandular storage. Their inhibition may be instantly disengaged, by dilution or physiochemical change, when venom is injected into tissue of the victim. This is Poly-His-poly-Gly peptide 2 from Atheris nitschei (Great lakes bush viper).